The following is a 286-amino-acid chain: ATP synthase gamma chain (286 aa).

This sequence belongs to the ATPase gamma chain family. As to quaternary structure, F-type ATPases have 2 components, CF(1) - the catalytic core - and CF(0) - the membrane proton channel. CF(1) has five subunits: alpha(3), beta(3), gamma(1), delta(1), epsilon(1). CF(0) has three main subunits: a, b and c.

The protein resides in the cell membrane. Functionally, produces ATP from ADP in the presence of a proton gradient across the membrane. The gamma chain is believed to be important in regulating ATPase activity and the flow of protons through the CF(0) complex. This is ATP synthase gamma chain from Ureaplasma parvum serovar 3 (strain ATCC 27815 / 27 / NCTC 11736).